Here is a 257-residue protein sequence, read N- to C-terminus: Acetylglutamate kinase (257 aa).

Substrate is bound by residues 41 to 42, arginine 63, and asparagine 155; that span reads GG.

The protein belongs to the acetylglutamate kinase family. ArgB subfamily.

It is found in the cytoplasm. The catalysed reaction is N-acetyl-L-glutamate + ATP = N-acetyl-L-glutamyl 5-phosphate + ADP. Its pathway is amino-acid biosynthesis; L-arginine biosynthesis; N(2)-acetyl-L-ornithine from L-glutamate: step 2/4. In terms of biological role, catalyzes the ATP-dependent phosphorylation of N-acetyl-L-glutamate. The polypeptide is Acetylglutamate kinase (Solibacter usitatus (strain Ellin6076)).